A 97-amino-acid polypeptide reads, in one-letter code: Putative pterin-4-alpha-carbinolamine dehydratase (97 aa).

The protein belongs to the pterin-4-alpha-carbinolamine dehydratase family.

It catalyses the reaction (4aS,6R)-4a-hydroxy-L-erythro-5,6,7,8-tetrahydrobiopterin = (6R)-L-erythro-6,7-dihydrobiopterin + H2O. This Dinoroseobacter shibae (strain DSM 16493 / NCIMB 14021 / DFL 12) protein is Putative pterin-4-alpha-carbinolamine dehydratase.